Reading from the N-terminus, the 409-residue chain is Menaquinone reductase (409 aa).

Residues glycine 11–alanine 15, cysteine 44–glycine 47, arginine 101, valine 125, aspartate 288, and glycine 300–isoleucine 301 contribute to the FAD site.

The protein belongs to the geranylgeranyl reductase family. FAD serves as cofactor.

It catalyses the reaction menaquinone-9 + AH2 = beta-dihydromenaquinone-9 + A. Its pathway is quinol/quinone metabolism; menaquinone biosynthesis. In terms of biological role, catalyzes the reduction of a single double bond in the isoprenoid tail of menaquinone (MK-9) in M.smegmatis, likely the beta-isoprene unit, forming the predominant form of menaquinone found in mycobacteria, MK-9(II-H2). This chain is Menaquinone reductase, found in Mycolicibacterium smegmatis (strain ATCC 700084 / mc(2)155) (Mycobacterium smegmatis).